Consider the following 151-residue polypeptide: Large ribosomal subunit protein bL9 (151 aa).

Belongs to the bacterial ribosomal protein bL9 family.

Binds to the 23S rRNA. This chain is Large ribosomal subunit protein bL9, found in Pelodictyon phaeoclathratiforme (strain DSM 5477 / BU-1).